We begin with the raw amino-acid sequence, 196 residues long: ATP-dependent Clp protease proteolytic subunit (196 aa).

The active-site Nucleophile is Ser-101. Residue His-126 is part of the active site.

The protein belongs to the peptidase S14 family. As to quaternary structure, component of the chloroplastic Clp protease core complex.

It is found in the plastid. The protein resides in the chloroplast stroma. The catalysed reaction is Hydrolysis of proteins to small peptides in the presence of ATP and magnesium. alpha-casein is the usual test substrate. In the absence of ATP, only oligopeptides shorter than five residues are hydrolyzed (such as succinyl-Leu-Tyr-|-NHMec, and Leu-Tyr-Leu-|-Tyr-Trp, in which cleavage of the -Tyr-|-Leu- and -Tyr-|-Trp bonds also occurs).. In terms of biological role, cleaves peptides in various proteins in a process that requires ATP hydrolysis. Has a chymotrypsin-like activity. Plays a major role in the degradation of misfolded proteins. The chain is ATP-dependent Clp protease proteolytic subunit from Atropa belladonna (Belladonna).